Here is a 343-residue protein sequence, read N- to C-terminus: L-threonine 3-dehydrogenase (343 aa).

Zn(2+) is bound at residue C38. Residues T40 and H43 each act as charge relay system in the active site. Zn(2+) contacts are provided by H63, E64, C93, C96, C99, and C107. Residues I176, D196, R201, L261–I263, and I286–G288 each bind NAD(+).

This sequence belongs to the zinc-containing alcohol dehydrogenase family. In terms of assembly, homotetramer. The cofactor is Zn(2+).

Its subcellular location is the cytoplasm. The catalysed reaction is L-threonine + NAD(+) = (2S)-2-amino-3-oxobutanoate + NADH + H(+). The protein operates within amino-acid degradation; L-threonine degradation via oxydo-reductase pathway; glycine from L-threonine: step 1/2. Its function is as follows. Catalyzes the NAD(+)-dependent oxidation of L-threonine to 2-amino-3-ketobutyrate. The protein is L-threonine 3-dehydrogenase of Thermus thermophilus (strain ATCC 27634 / DSM 579 / HB8).